A 182-amino-acid polypeptide reads, in one-letter code: UPF0316 protein BCQ_3166 (182 aa).

3 consecutive transmembrane segments (helical) span residues 6–26, 32–52, and 58–78; these read LIFVLQIIYVPILTIRTILLV, SAAAVGLLEGAIYIVSLGIVF, and WMNIVAYVIGFSAGLLLGGYI.

This sequence belongs to the UPF0316 family.

It is found in the cell membrane. In Bacillus cereus (strain Q1), this protein is UPF0316 protein BCQ_3166.